The sequence spans 158 residues: Transcription elongation factor GreA (158 aa).

Belongs to the GreA/GreB family.

Its function is as follows. Necessary for efficient RNA polymerase transcription elongation past template-encoded arresting sites. The arresting sites in DNA have the property of trapping a certain fraction of elongating RNA polymerases that pass through, resulting in locked ternary complexes. Cleavage of the nascent transcript by cleavage factors such as GreA or GreB allows the resumption of elongation from the new 3'terminus. GreA releases sequences of 2 to 3 nucleotides. The polypeptide is Transcription elongation factor GreA (Pelagibacter ubique (strain HTCC1062)).